Here is a 176-residue protein sequence, read N- to C-terminus: MTVPNHQQDISDSDLESRPSKTRLKQEMHALQVLGERLVELEPARITELDLPEKLTDALLEARRITSHGARRRQMQFIGKLMRAIDPVPVQEKLDAWQHSSLKHTAWLHQLERWRDRLISDEAAVTEFVQSYPQTDVRQLRTLLRNVEKEKLANKPPKSFRALFQLLRQIIPEISA.

A compositionally biased stretch (polar residues) spans 1–10 (MTVPNHQQDI). Residues 1–22 (MTVPNHQQDISDSDLESRPSKT) form a disordered region.

The protein belongs to the DarP family.

It is found in the cytoplasm. Its function is as follows. Member of a network of 50S ribosomal subunit biogenesis factors which assembles along the 30S-50S interface, preventing incorrect 23S rRNA structures from forming. Promotes peptidyl transferase center (PTC) maturation. In Nitrosomonas eutropha (strain DSM 101675 / C91 / Nm57), this protein is Dual-action ribosomal maturation protein DarP.